The sequence spans 442 residues: Testican-1 (442 aa).

Positions Met-1 to Ser-21 are cleaved as a signal peptide. Disulfide bonds link Cys-89/Cys-100, Cys-94/Cys-110, Cys-139/Cys-169, Cys-142/Cys-162, Cys-151/Cys-183, Cys-316/Cys-340, Cys-351/Cys-358, and Cys-360/Cys-379. In terms of domain architecture, Kazal-like spans Pro-133–Cys-185. One can recognise a Thyroglobulin type-1 domain in the interval Gly-313–Cys-379. Disordered regions lie at residues Gly-375–Val-395 and Thr-420–Trp-442. Ser-386 and Ser-391 each carry an O-linked (Xyl...) (glycosaminoglycan) serine glycan. The span at Glu-425–Trp-442 shows a compositional bias: acidic residues.

Contains chondroitin sulfate and heparan sulfate O-linked oligosaccharides. As to expression, predominantly expressed in the postsynaptic area of pyramidal neurons.

The protein resides in the secreted. It is found in the extracellular space. Its subcellular location is the extracellular matrix. Functionally, may play a role in cell-cell and cell-matrix interactions. May contribute to various neuronal mechanisms in the central nervous system. This is Testican-1 (Spock1) from Mus musculus (Mouse).